The following is a 99-amino-acid chain: Nucleoid-associated protein LCABL_24440 (99 aa).

The protein belongs to the YbaB/EbfC family. In terms of assembly, homodimer.

It localises to the cytoplasm. The protein localises to the nucleoid. Binds to DNA and alters its conformation. May be involved in regulation of gene expression, nucleoid organization and DNA protection. The chain is Nucleoid-associated protein LCABL_24440 from Lacticaseibacillus casei (strain BL23) (Lactobacillus casei).